The following is a 404-amino-acid chain: Probable tRNA sulfurtransferase (404 aa).

The THUMP domain maps to 60-165; sequence HEVAESLKEI…DEAAYISYEN (106 aa). Residues 183–184, 208–209, Arg265, Gly287, and Gln296 contribute to the ATP site; these read ML and HF.

This sequence belongs to the ThiI family.

It is found in the cytoplasm. It carries out the reaction [ThiI sulfur-carrier protein]-S-sulfanyl-L-cysteine + a uridine in tRNA + 2 reduced [2Fe-2S]-[ferredoxin] + ATP + H(+) = [ThiI sulfur-carrier protein]-L-cysteine + a 4-thiouridine in tRNA + 2 oxidized [2Fe-2S]-[ferredoxin] + AMP + diphosphate. It catalyses the reaction [ThiS sulfur-carrier protein]-C-terminal Gly-Gly-AMP + S-sulfanyl-L-cysteinyl-[cysteine desulfurase] + AH2 = [ThiS sulfur-carrier protein]-C-terminal-Gly-aminoethanethioate + L-cysteinyl-[cysteine desulfurase] + A + AMP + 2 H(+). The protein operates within cofactor biosynthesis; thiamine diphosphate biosynthesis. Catalyzes the ATP-dependent transfer of a sulfur to tRNA to produce 4-thiouridine in position 8 of tRNAs, which functions as a near-UV photosensor. Also catalyzes the transfer of sulfur to the sulfur carrier protein ThiS, forming ThiS-thiocarboxylate. This is a step in the synthesis of thiazole, in the thiamine biosynthesis pathway. The sulfur is donated as persulfide by IscS. This is Probable tRNA sulfurtransferase from Streptococcus agalactiae serotype Ia (strain ATCC 27591 / A909 / CDC SS700).